Reading from the N-terminus, the 397-residue chain is DNA-directed RNA polymerase subunit Rpo1C (397 aa).

Belongs to the RNA polymerase beta' chain family. Part of the RNA polymerase complex.

The protein resides in the cytoplasm. It carries out the reaction RNA(n) + a ribonucleoside 5'-triphosphate = RNA(n+1) + diphosphate. In terms of biological role, DNA-dependent RNA polymerase (RNAP) catalyzes the transcription of DNA into RNA using the four ribonucleoside triphosphates as substrates. Forms part of the jaw domain. The sequence is that of DNA-directed RNA polymerase subunit Rpo1C from Pyrococcus abyssi (strain GE5 / Orsay).